Here is a 186-residue protein sequence, read N- to C-terminus: Lumazine protein (186 aa).

Lumazine-binding repeat units follow at residues 1–96 (MFRG…VGRG) and 97–186 (GLTG…LNEW).

6,7-dimethyl-8-(1-D-ribityl)lumazine is required as a cofactor.

Antenna protein that modulates the color of the bioluminescence emission of the luciferase. In the presence of LumP, luciferase emission is shifted to higher energy values (shorter wavelength). The chain is Lumazine protein (lumP) from Photobacterium leiognathi.